The sequence spans 314 residues: Leucine-rich repeat-containing protein 59 (314 aa).

Topologically, residues 1-247 (MNKGKIENIK…VPKAKRSICS (247 aa)) are cytoplasmic. LRR repeat units follow at residues 14 to 35 (DGNE…ELAA), 38 to 60 (KATF…CSLT), 61 to 82 (HLIK…IGQL), 84 to 106 (NLQH…SQLK), and 107 to 126 (SLKW…AKAA). A coiled-coil region spans residues 146-216 (MKVLQEEAEK…AVAAQEQQKK (71 aa)). 2 disordered regions span residues 165-197 (REQE…KERK) and 212-237 (EQQK…APES). A compositionally biased stretch (basic residues) spans 215–225 (KKKKEEKKKKA). Residues 248-268 (LFFSLLLKLVLLLVIGVSSVV) traverse the membrane as a helical segment. Residues 269–314 (AVCQLTELRKEAFCIPLNVHFEETVRWAQGLDVVQQVIQKMSDLRT) are Lumenal-facing.

In terms of assembly, interacts with SGO1.

It is found in the microsome membrane. The protein localises to the endoplasmic reticulum membrane. The protein resides in the nucleus envelope. Its function is as follows. Required for nuclear import of FGF1. This chain is Leucine-rich repeat-containing protein 59 (lrrc59), found in Danio rerio (Zebrafish).